A 270-amino-acid chain; its full sequence is MPELPEVETTRRGIAPYLEGQRVERVIVRERRLRWPIPEDLDVRLSGQRIVSVERRAKYLLLGAEAGTLISHLGMSGSLRLVESGTPASRHEHVDIELASGMALRYTDPRRFGAMLWSLAPLEHELLRNLGPEPLTDAFAGQRLFELSRGRSMAVKPFIMDNAVVVGVGNIYASEALFAAGIDPRKPAGSISKARYLRLAEEIKRILAIAIERGGTTLRDFVGGDGQPGYFQQELFVYGRGGEFCKVCGSTLREIRLGQRASVYCPRCQR.

The active-site Schiff-base intermediate with DNA is the proline 2. The active-site Proton donor is glutamate 3. The Proton donor; for beta-elimination activity role is filled by lysine 58. The DNA site is built by histidine 91, arginine 110, and arginine 151. The FPG-type zinc finger occupies 236–270 (FVYGRGGEFCKVCGSTLREIRLGQRASVYCPRCQR). Arginine 260 (proton donor; for delta-elimination activity) is an active-site residue.

This sequence belongs to the FPG family. As to quaternary structure, monomer. Zn(2+) serves as cofactor.

The enzyme catalyses Hydrolysis of DNA containing ring-opened 7-methylguanine residues, releasing 2,6-diamino-4-hydroxy-5-(N-methyl)formamidopyrimidine.. It catalyses the reaction 2'-deoxyribonucleotide-(2'-deoxyribose 5'-phosphate)-2'-deoxyribonucleotide-DNA = a 3'-end 2'-deoxyribonucleotide-(2,3-dehydro-2,3-deoxyribose 5'-phosphate)-DNA + a 5'-end 5'-phospho-2'-deoxyribonucleoside-DNA + H(+). Involved in base excision repair of DNA damaged by oxidation or by mutagenic agents. Acts as a DNA glycosylase that recognizes and removes damaged bases. Has a preference for oxidized purines, such as 7,8-dihydro-8-oxoguanine (8-oxoG). Has AP (apurinic/apyrimidinic) lyase activity and introduces nicks in the DNA strand. Cleaves the DNA backbone by beta-delta elimination to generate a single-strand break at the site of the removed base with both 3'- and 5'-phosphates. The chain is Formamidopyrimidine-DNA glycosylase from Pseudomonas aeruginosa (strain LESB58).